The sequence spans 116 residues: U16-barytoxin-Tl1d (116 aa).

The first 20 residues, 1–20, serve as a signal peptide directing secretion; the sequence is MKTIIVFLSLLVLATKFGDA. Positions 21 to 74 are excised as a propeptide; the sequence is NEGVNQEQMKEVIQNEFREDFLNEMAAMSLLQQLEAIESTLLEKEADRNSRQKR. Cystine bridges form between Cys75-Cys90, Cys82-Cys95, and Cys89-Cys110.

This sequence belongs to the neurotoxin 14 (magi-1) family. 06 (ICK-Trit) subfamily. As to expression, expressed by the venom gland.

It localises to the secreted. Its function is as follows. Ion channel inhibitor. This Trittame loki (Brush-footed trapdoor spider) protein is U16-barytoxin-Tl1d.